The sequence spans 1021 residues: Receptor-like protein EIX2 (1021 aa).

An N-terminal signal peptide occupies residues 1-24 (MGKRTNPRHFLVTWSLLLLETAFG). Positions 25 to 109 (LTSREVNKTL…PILTGKVSPS (85 aa)) are N-cap. Residues 25 to 963 (LTSREVNKTL…DDDDEFSSLE (939 aa)) lie on the Extracellular side of the membrane. An N-linked (GlcNAc...) asparagine glycan is attached at Asn31. LRR repeat units lie at residues 113–136 (LEYLNFLDLSVNGFENSEIPRFIG), 138–161 (LKRLEYLNLSSSDFSGEIPAQFQN), 162–184 (LTSLRILDLGNNNLIVKDLVWLS), 186–211 (LSSLEFLRLGGNDFQARNWFREITKV), 214–237 (LKELDLSVCGLSKFVPSPADVANS), and 239–262 (LISLSVLHLCCNEFSTSSEYSWLF). 2 N-linked (GlcNAc...) asparagine glycosylation sites follow: Asn145 and Asn161. Asn236 is a glycosylation site (N-linked (GlcNAc...) asparagine). N-linked (GlcNAc...) asparagine glycosylation occurs at Asn263. LRR repeat units follow at residues 265–288 (STSLTSIDLSHNQLSRQIDDRFGS), 290–313 (MYLEHLNLANNFGAEGGVPSSFGN), 314–337 (LTRLHYLDMSNTQTYQWLPELFLR), 342–365 (RKSLEVLGLNDNSLFGSIVNVTRF), 366–388 (SSLKKLYLQKNMLNGFFMERVGQ), 389–412 (VSSLEYLDLSDNQMRGPLPDLALF), 413–436 (PSLRELHLGSNQFQGRIPQGIGKL), 437–459 (SQLRIFDVSSNRLEGLPESMGQL), 461–483 (NLERFDASYNVLKGTITESHFSN), 484–507 (LSSLVDLDLSFNLLSLNTRFDWVP), 509–532 (FQLQFIRLPSCNMGPSFPKWLQTQ), 533–555 (NNYTLLDISLANISDMLPSWFSN), 557–581 (PPELKILNLSNNHISGRVSEFIVSK), and 583–607 (DYMIIDLSSNNFSGHLPLVPANIQI). The N-linked (GlcNAc...) asparagine glycan is linked to Asn313. Asn483 carries N-linked (GlcNAc...) asparagine glycosylation. N-linked (GlcNAc...) asparagine glycans are attached at residues Asn534, Asn544, Asn564, and Asn593. The stretch at 608–626 (FYLHKNHFSGSISSICRNT) is one LRR 21; degenerate repeat. LRR repeat units follow at residues 627 to 651 (IGAATSIDLSRNQFSGEVPDCWMNM), 652 to 675 (SNLAVLNLAYNNFSGKVPQSLGSL), 677 to 698 (NLEALYIRQNSFRGMLPSFSQC), 699 to 722 (QLLQILDIGGNKLTGRIPAWIGTD), 723 to 747 (LLQLRILSLRSNKFDGSIPSLICQL), and 749 to 773 (FLQILDLSENGLSGKIPQCLNNFTI). Residues Asn650 and Asn663 are each glycosylated (N-linked (GlcNAc...) asparagine). N-linked (GlcNAc...) asparagine glycans are attached at residues Asn770 and Asn778. LRR repeat units follow at residues 818 to 842 (LLYLKIIDLSSNKLVGGIPKEIAEM), 843 to 866 (RGLRSLNLSRNDLNGTVVEGIGQM), 867 to 890 (KLLESLDLSRNQLSGMIPQGLSNL), and 892 to 913 (FLSVLDLSNNHLSGRIPSSTQL). N-linked (GlcNAc...) asparagine glycosylation is found at Asn849, Asn856, and Asn889. The segment at 914–963 (QSFDRSSYSGNAQLCGPPLEECPGYAPPIDRGSNTNPQEHDDDDEFSSLE) is C-cap/acidic domain. Residues 964–984 (FYVSMVLGFFVTFWGILGCLI) traverse the membrane as a helical segment. Residues 985–1021 (VNRSWRNAYFTFLTDMKSWLHMTSRVCFARLKGKLRN) are Cytoplasmic-facing.

Belongs to the RLP family. In terms of assembly, interacts with EIX elicitor protein.

The protein resides in the cell membrane. Functionally, involved in plant defense. Confers resistance to the fungal pathogen T.viride through recognition of the EIX elicitor protein. The protein is Receptor-like protein EIX2 of Solanum lycopersicum (Tomato).